The primary structure comprises 336 residues: Potassium channel subfamily K member 1 (336 aa).

The Cytoplasmic segment spans residues 1 to 20 (MLQSLAGSSCVRLVERHRSA). The helical transmembrane segment at 21 to 41 (RCFGFLVLGYLLYLVFGAVVF) threads the bilayer. Residues 42–103 (SSVELPYEDL…SNASGNWNWD (62 aa)) lie on the Extracellular side of the membrane. N-linked (GlcNAc...) asparagine glycosylation occurs at asparagine 95. An intramembrane region (helical) is located at residues 104–116 (FTSALFFASTVLS). An intramembrane segment occupies 117-122 (TTGYGH). Positions 117-122 (TTGYGH) are selectivity filter 1. The Extracellular segment spans residues 123–132 (TVPLSDGGKA). Residues 133–156 (FCIIYSVIGIPFTLLFLTAVVQRI) form a helical membrane-spanning segment. At 157–181 (TVHVTRRPVLYFHIRWGFSKQVVAI) the chain is on the cytoplasmic side. Residues 182–202 (VHAVLLGFVTVSCFFFIPAAV) traverse the membrane as a helical segment. Topologically, residues 203 to 211 (FSVLEDDWN) are extracellular. The helical intramembrane region spans 212 to 224 (FLESFYFCFISLS). The interval 225-230 (TIGLGD) is selectivity filter 2. The stretch at 225–231 (TIGLGDY) is an intramembrane region. The Extracellular portion of the chain corresponds to 232–243 (VPGEGYNQKFRE). A helical membrane pass occupies residues 244-267 (LYKIGITCYLLLGLIAMLVVLETF). Residues 268–336 (CELHELKKFR…SACMDGPANH (69 aa)) lie on the Cytoplasmic side of the membrane. Residue lysine 274 forms a Glycyl lysine isopeptide (Lys-Gly) (interchain with G-Cter in SUMO) linkage. An important for intracellular retention in recycling endosomes region spans residues 293 to 299 (IIEHDQL). Residues 315–336 (QKQNEPFVATQSSACMDGPANH) are disordered. The residue at position 326 (serine 326) is a Phosphoserine.

This sequence belongs to the two pore domain potassium channel (TC 1.A.1.8) family. In terms of assembly, homodimer; disulfide-linked. Heterodimer with KCNK2; disulfide-linked. In astrocytes, forms mostly heterodimeric potassium channels with KCNK2, with only a minor proportion of functional channels containing homodimeric KCNK1. Interacts with KCNK3 and KCNK9, forming functional heterodimeric channels. Interacts with GNG4. Identified in a complex with PSD and ARF6; interacts only with PSD that is bound to ARF6. Interacts with UBE2I. Post-translationally, sumoylation is controversial. Sumoylated by UBE2I. Not sumoylated when expressed in xenopus oocytes or mammalian cells. Sumoylation inactivates the channel, but does not interfere with expression at the cell membrane. Sumoylation of a single subunit is sufficient to silence the dimeric channel. Sumoylation of KCNK1 is sufficient to silence heterodimeric channels formed by KCNK1 and KCNK3 or KCNK9. Desumoylated by SENP1; this activates the channel. Desumoylated by SENP1; this strongly increases halothane-mediated activation of heterodimeric channels formed with KCNK9. SENP1 treatment has no effect.

Its subcellular location is the cell membrane. The protein localises to the recycling endosome. It localises to the synaptic cell membrane. It is found in the cytoplasmic vesicle. The protein resides in the perikaryon. Its subcellular location is the cell projection. The protein localises to the dendrite. It localises to the apical cell membrane. It catalyses the reaction K(+)(in) = K(+)(out). The enzyme catalyses NH4(+)(in) = NH4(+)(out). The catalysed reaction is Na(+)(in) = Na(+)(out). It carries out the reaction Rb(+)(in) = Rb(+)(out). It catalyses the reaction Cs(+)(in) = Cs(+)(out). The enzyme catalyses Li(+)(in) = Li(+)(out). The catalysed reaction is L-glutamate(out) = L-glutamate(in). It carries out the reaction chloride(in) = chloride(out). In terms of biological role, ion channel that contributes to passive transmembrane potassium transport and to the regulation of the resting membrane potential in brain astrocytes, but also in kidney and in other tissues. Forms dimeric channels through which potassium ions pass in accordance with their electrochemical gradient. The channel is selective for K(+) ions at physiological potassium concentrations and at neutral pH, but becomes permeable to Na(+) at subphysiological K(+) levels, and upon acidification of the extracellular medium. The homodimer has very low potassium channel activity, when expressed in heterologous systems, and can function as weakly inward rectifying potassium channel. Channel activity is modulated by activation of serotonin receptors. Heterodimeric channels containing KCNK1 and KCNK2 have much higher activity, and may represent the predominant form in astrocytes. Heterodimeric channels containing KCNK1 and KCNK3 or KCNK9 have much higher activity. Heterodimeric channels formed by KCNK1 and KCNK9 may contribute to halothane-sensitive currents. Mediates outward rectifying potassium currents in dentate gyrus granule cells and contributes to the regulation of their resting membrane potential. Contributes to the regulation of action potential firing in dentate gyrus granule cells and down-regulates their intrinsic excitability. In astrocytes, the heterodimer formed by KCNK1 and KCNK2 is required for rapid glutamate release in response to activation of G-protein coupled receptors, such as F2R and CNR1. Required for normal ion and water transport in the kidney. Contributes to the regulation of the resting membrane potential of pancreatic beta cells. The low channel activity of homodimeric KCNK1 may be due to sumoylation. The low channel activity may be due to rapid internalization from the cell membrane and retention in recycling endosomes. Permeable to monovalent cations with ion selectivity for K(+) &gt; Rb(+) &gt;&gt; NH4(+) &gt;&gt; Cs(+) = Na(+) = Li(+). This is Potassium channel subfamily K member 1 from Pongo abelii (Sumatran orangutan).